A 309-amino-acid chain; its full sequence is ATP synthase gamma chain (309 aa).

This sequence belongs to the ATPase gamma chain family. As to quaternary structure, F-type ATPases have 2 components, CF(1) - the catalytic core - and CF(0) - the membrane proton channel. CF(1) has five subunits: alpha(3), beta(3), gamma(1), delta(1), epsilon(1). CF(0) has three main subunits: a, b and c.

Its subcellular location is the cell membrane. In terms of biological role, produces ATP from ADP in the presence of a proton gradient across the membrane. The gamma chain is believed to be important in regulating ATPase activity and the flow of protons through the CF(0) complex. This chain is ATP synthase gamma chain, found in Mycolicibacterium gilvum (strain PYR-GCK) (Mycobacterium gilvum (strain PYR-GCK)).